The chain runs to 298 residues: NAD kinase (298 aa).

The active-site Proton acceptor is Asp-80. NAD(+) contacts are provided by residues 80–81 (DG), 154–155 (ND), Arg-182, Asp-184, 195–200 (TAYALS), Ala-219, and Gln-253.

Belongs to the NAD kinase family. The cofactor is a divalent metal cation.

The protein resides in the cytoplasm. It carries out the reaction NAD(+) + ATP = ADP + NADP(+) + H(+). Involved in the regulation of the intracellular balance of NAD and NADP, and is a key enzyme in the biosynthesis of NADP. Catalyzes specifically the phosphorylation on 2'-hydroxyl of the adenosine moiety of NAD to yield NADP. In Acidovorax sp. (strain JS42), this protein is NAD kinase.